Here is a 40-residue protein sequence, read N- to C-terminus: Photosystem II reaction center protein J (40 aa).

Residues 8–28 (IPLWVIGTVAGILVIGLIGIF) traverse the membrane as a helical segment.

It belongs to the PsbJ family. In terms of assembly, PSII is composed of 1 copy each of membrane proteins PsbA, PsbB, PsbC, PsbD, PsbE, PsbF, PsbH, PsbI, PsbJ, PsbK, PsbL, PsbM, PsbT, PsbX, PsbY, PsbZ, Psb30/Ycf12, at least 3 peripheral proteins of the oxygen-evolving complex and a large number of cofactors. It forms dimeric complexes.

It localises to the plastid. Its subcellular location is the chloroplast thylakoid membrane. Its function is as follows. One of the components of the core complex of photosystem II (PSII). PSII is a light-driven water:plastoquinone oxidoreductase that uses light energy to abstract electrons from H(2)O, generating O(2) and a proton gradient subsequently used for ATP formation. It consists of a core antenna complex that captures photons, and an electron transfer chain that converts photonic excitation into a charge separation. The chain is Photosystem II reaction center protein J from Lepidium virginicum (Virginia pepperweed).